The primary structure comprises 264 residues: Carbonic anhydrase (264 aa).

Residues 1–33 constitute a signal peptide (tat-type signal); the sequence is MSSTLYRRQLLKLLGMSVLGTSFSSCVTSPARA. The Alpha-carbonic anhydrase domain occupies 36 to 264; that stretch reads VNWGYIGKVG…LNDRLVIEAI (229 aa). Histidine 127, histidine 129, and histidine 146 together coordinate Zn(2+). 214-215 provides a ligand contact to substrate; it reads TT.

Belongs to the alpha-carbonic anhydrase family. It depends on Zn(2+) as a cofactor. Post-translationally, predicted to be exported by the Tat system. The position of the signal peptide cleavage has not been experimentally proven.

It carries out the reaction hydrogencarbonate + H(+) = CO2 + H2O. Its function is as follows. Reversible hydration of carbon dioxide. This chain is Carbonic anhydrase (ecaA), found in Nostoc sp. (strain PCC 7120 / SAG 25.82 / UTEX 2576).